The following is a 397-amino-acid chain: Lysophospholipid transporter LplT (397 aa).

The Periplasmic portion of the chain corresponds to 1–17; the sequence is MSESVHTNTSLWSKGMK. A helical membrane pass occupies residues 18-38; it reads AVIVAQFLSAFGDNALLFATL. Over 39 to 52 the chain is Cytoplasmic; that stretch reads ALLKAQFYPEWSQP. Residues 53–73 form a helical membrane-spanning segment; sequence ILQMVFVGAYILFAPFVGQVA. Residues 74 to 90 are Periplasmic-facing; the sequence is DSFAKGRVMMFANGLKL. A helical membrane pass occupies residues 91–111; that stretch reads LGAASICFGINPFLGYTLVGV. Residues 112 to 144 are Cytoplasmic-facing; that stretch reads GAAAYSPAKYGILGELTTGSKLVKANGLMEAST. Residues 145 to 165 form a helical membrane-spanning segment; it reads IAAILLGSVAGGVLADWHILV. Position 166 (A166) is a topological domain, periplasmic. The helical transmembrane segment at 167-187 threads the bilayer; that stretch reads LAACALAYGGAVVANIYIPKL. At 188–226 the chain is on the cytoplasmic side; the sequence is AAARPGQSWNLISMTRSFLNACTSLWRNGETRFSLVGTS. A helical membrane pass occupies residues 227–247; it reads LFWGAGVTLRFLLVLWVPVAL. Over 248-256 the chain is Periplasmic; it reads GITDNATPT. Residues 257 to 277 traverse the membrane as a helical segment; sequence YLNAMVAIGIVVGAGAAAKLV. The Cytoplasmic portion of the chain corresponds to 278-280; sequence TLE. The chain crosses the membrane as a helical span at residues 281 to 301; sequence TVSRCMPAGILIGVVVLIFSL. Over 302–304 the chain is Periplasmic; the sequence is QHE. The chain crosses the membrane as a helical span at residues 305-325; sequence LLPAYALLMLIGVLGGFFVVP. Topologically, residues 326–343 are cytoplasmic; that stretch reads LNALLQERGKKSVGAGNA. The chain crosses the membrane as a helical span at residues 344–364; that stretch reads IAVQNLGENSAMLLMLGIYSL. Topologically, residues 365 to 366 are periplasmic; that stretch reads AV. Residues 367–387 form a helical membrane-spanning segment; sequence MVGIPVVPIGIGFGALFALAI. Over 388 to 397 the chain is Cytoplasmic; sequence TALWIWQRRH.

The protein belongs to the major facilitator superfamily. LplT (TC 2.A.1.42) family.

Its subcellular location is the cell inner membrane. Functionally, catalyzes the facilitated diffusion of 2-acyl-glycero-3-phosphoethanolamine (2-acyl-GPE) into the cell. This is Lysophospholipid transporter LplT from Escherichia coli O6:K15:H31 (strain 536 / UPEC).